A 407-amino-acid polypeptide reads, in one-letter code: Polygalacturonase (407 aa).

A signal peptide spans 1–26 (MAPHLNIVPSMFVLLLLFISASKVQS). PbH1 repeat units lie at residues 180-206 (CKNITLERLKIEAPDESPNTDGIHMGK) and 207-228 (SEGVNIIASDIKTGDDCISIGD). N-linked (GlcNAc...) asparagine glycosylation occurs at N182. D221 (proton donor) is an active-site residue. C223 and C240 are oxidised to a cystine. Residue H244 is part of the active site. PbH1 repeat units follow at residues 260-281 (VEGIKISNCTITNTSNGARIKT) and 290-311 (VSEIHFEDITMNNVSSPILIDQ). Residues N267, N272, N302, and N331 are each glycosylated (N-linked (GlcNAc...) asparagine). 2 disulfides stabilise this stretch: C351-C357 and C379-C395. A PbH1 5 repeat occupies 357–384 (CQNVELADIDIKHNGAEPATSQCLNVKP).

It belongs to the glycosyl hydrolase 28 family. As to expression, pollen.

The protein localises to the secreted. Its subcellular location is the cell wall. It carries out the reaction (1,4-alpha-D-galacturonosyl)n+m + H2O = (1,4-alpha-D-galacturonosyl)n + (1,4-alpha-D-galacturonosyl)m.. Functionally, may function in the depolymerization of the pectin in its walls during pollen tube elongation, or in that of the pistil during pollination. This Gossypium hirsutum (Upland cotton) protein is Polygalacturonase (G9).